The following is a 391-amino-acid chain: Carbamoyl phosphate synthase small chain (391 aa).

Residues 1–202 (MTQPAILVLE…AHASAGSGEE (202 aa)) are CPSase. 3 residues coordinate L-glutamine: Ser47, Gly254, and Gly256. The 186-residue stretch at 206 to 391 (KVVAYDYGVK…RFVDLMAARA (186 aa)) folds into the Glutamine amidotransferase type-1 domain. Catalysis depends on Cys282, which acts as the Nucleophile. L-glutamine is bound by residues Leu283, Gln286, Asn324, Gly326, and Phe327. Active-site residues include His366 and Glu368.

The protein belongs to the CarA family. As to quaternary structure, composed of two chains; the small (or glutamine) chain promotes the hydrolysis of glutamine to ammonia, which is used by the large (or ammonia) chain to synthesize carbamoyl phosphate. Tetramer of heterodimers (alpha,beta)4.

It catalyses the reaction hydrogencarbonate + L-glutamine + 2 ATP + H2O = carbamoyl phosphate + L-glutamate + 2 ADP + phosphate + 2 H(+). The catalysed reaction is L-glutamine + H2O = L-glutamate + NH4(+). The protein operates within amino-acid biosynthesis; L-arginine biosynthesis; carbamoyl phosphate from bicarbonate: step 1/1. It participates in pyrimidine metabolism; UMP biosynthesis via de novo pathway; (S)-dihydroorotate from bicarbonate: step 1/3. Small subunit of the glutamine-dependent carbamoyl phosphate synthetase (CPSase). CPSase catalyzes the formation of carbamoyl phosphate from the ammonia moiety of glutamine, carbonate, and phosphate donated by ATP, constituting the first step of 2 biosynthetic pathways, one leading to arginine and/or urea and the other to pyrimidine nucleotides. The small subunit (glutamine amidotransferase) binds and cleaves glutamine to supply the large subunit with the substrate ammonia. This Xanthomonas axonopodis pv. citri (strain 306) protein is Carbamoyl phosphate synthase small chain.